Reading from the N-terminus, the 294-residue chain is Uracil-DNA glycosylase (294 aa).

D139 functions as the Proton acceptor in the catalytic mechanism.

This sequence belongs to the uracil-DNA glycosylase (UDG) superfamily. UNG family.

It localises to the host nucleus. The catalysed reaction is Hydrolyzes single-stranded DNA or mismatched double-stranded DNA and polynucleotides, releasing free uracil.. In terms of biological role, excises uracil residues from the DNA which can arise as a result of misincorporation of dUMP residues by DNA polymerase or deamination of cytosines. Therefore may reduce deleterious uracil incorporation into the viral genome, particularly in terminally differentiated cells which lack DNA repair enzymes. This chain is Uracil-DNA glycosylase (UL2), found in Human herpesvirus 2 (strain 333) (HHV-2).